A 604-amino-acid chain; its full sequence is Netrin-1 (604 aa).

The N-terminal stretch at 1–24 (MMRAVWEALAALAAVACLVGAVRG) is a signal peptide. Residues 47-284 (HPRRCIPDFV…AVSDLQVGGR (238 aa)) form the Laminin N-terminal domain. Residues Asn95, Asn116, and Asn131 are each glycosylated (N-linked (GlcNAc...) asparagine). 15 disulfides stabilise this stretch: Cys119-Cys152, Cys285-Cys294, Cys287-Cys304, Cys306-Cys315, Cys318-Cys338, Cys341-Cys350, Cys343-Cys368, Cys371-Cys380, Cys383-Cys401, Cys404-Cys416, Cys406-Cys423, Cys425-Cys434, Cys437-Cys451, Cys472-Cys544, and Cys491-Cys601. 3 consecutive Laminin EGF-like domains span residues 285–340 (CKCN…ECVA), 341–403 (CNCN…ACKA), and 404–453 (CDCH…PCIK). Asn417 carries an N-linked (GlcNAc...) asparagine glycan. In terms of domain architecture, NTR spans 472–601 (CDSYCKASKG…FQQREKKGKC (130 aa)). Positions 530–532 (RGD) match the Cell attachment site motif.

In terms of assembly, binds to its receptors; DCC, UNC5A, UNC5B, UNC5C and probably UNC5D. Binds to its receptor; DSCAM. Interacts with APP. As to expression, in the embryo, widely expressed in the developing nervous system and in mesodermal tissues.

Its subcellular location is the secreted. It is found in the cytoplasm. In terms of biological role, netrins control guidance of CNS commissural axons and peripheral motor axons. Its association with either DCC or some UNC5 receptors will lead to axon attraction or repulsion, respectively. Binding to UNC5C might cause dissociation of UNC5C from polymerized TUBB3 in microtubules and thereby lead to increased microtubule dynamics and axon repulsion. Involved in dorsal root ganglion axon projection towards the spinal cord. It also serves as a survival factor via its association with its receptors which prevent the initiation of apoptosis. Involved in colorectal tumorigenesis by regulating apoptosis. The protein is Netrin-1 (Ntn1) of Mus musculus (Mouse).